A 235-amino-acid chain; its full sequence is Orotidine 5'-phosphate decarboxylase (235 aa).

Substrate is bound by residues aspartate 12, lysine 34, 61–70 (DMKLLDIDNT), threonine 116, arginine 177, glutamine 186, glycine 206, and arginine 207. Catalysis depends on lysine 63, which acts as the Proton donor.

It belongs to the OMP decarboxylase family. Type 1 subfamily. In terms of assembly, homodimer.

It catalyses the reaction orotidine 5'-phosphate + H(+) = UMP + CO2. The protein operates within pyrimidine metabolism; UMP biosynthesis via de novo pathway; UMP from orotate: step 2/2. In terms of biological role, catalyzes the decarboxylation of orotidine 5'-monophosphate (OMP) to uridine 5'-monophosphate (UMP). This is Orotidine 5'-phosphate decarboxylase from Rhizobium etli (strain ATCC 51251 / DSM 11541 / JCM 21823 / NBRC 15573 / CFN 42).